Consider the following 432-residue polypeptide: Glutamyl-tRNA reductase (432 aa).

Substrate-binding positions include 49-52, serine 109, 114-116, and glutamine 120; these read TCNR and EGQ. Cysteine 50 acts as the Nucleophile in catalysis. 198–203 contributes to the NADP(+) binding site; the sequence is GAGRMS.

It belongs to the glutamyl-tRNA reductase family. Homodimer.

The enzyme catalyses (S)-4-amino-5-oxopentanoate + tRNA(Glu) + NADP(+) = L-glutamyl-tRNA(Glu) + NADPH + H(+). It functions in the pathway porphyrin-containing compound metabolism; protoporphyrin-IX biosynthesis; 5-aminolevulinate from L-glutamyl-tRNA(Glu): step 1/2. The protein operates within porphyrin-containing compound metabolism; chlorophyll biosynthesis. In terms of biological role, catalyzes the NADPH-dependent reduction of glutamyl-tRNA(Glu) to glutamate 1-semialdehyde (GSA). The polypeptide is Glutamyl-tRNA reductase (Synechococcus sp. (strain CC9605)).